The following is a 134-amino-acid chain: Kinetochore-binding protein 3 (134 aa).

It localises to the nucleus. Its subcellular location is the chromosome. It is found in the centromere. The protein resides in the kinetochore. This is Kinetochore-binding protein 3 (kbp-3) from Caenorhabditis elegans.